Reading from the N-terminus, the 177-residue chain is NADH-quinone oxidoreductase subunit B (177 aa).

Residues C56, C57, C121, and C151 each coordinate [4Fe-4S] cluster.

The protein belongs to the complex I 20 kDa subunit family. NDH-1 is composed of 14 different subunits. Subunits NuoB, C, D, E, F, and G constitute the peripheral sector of the complex. Requires [4Fe-4S] cluster as cofactor.

It localises to the cell inner membrane. It catalyses the reaction a quinone + NADH + 5 H(+)(in) = a quinol + NAD(+) + 4 H(+)(out). In terms of biological role, NDH-1 shuttles electrons from NADH, via FMN and iron-sulfur (Fe-S) centers, to quinones in the respiratory chain. Couples the redox reaction to proton translocation (for every two electrons transferred, four hydrogen ions are translocated across the cytoplasmic membrane), and thus conserves the redox energy in a proton gradient. The protein is NADH-quinone oxidoreductase subunit B of Ruegeria pomeroyi (strain ATCC 700808 / DSM 15171 / DSS-3) (Silicibacter pomeroyi).